The sequence spans 821 residues: Elongator complex protein 2 (821 aa).

WD repeat units follow at residues 56–100 (GHTA…VLKS), 105–152 (GHEG…VKCL), 160–200 (GFVL…FQKM), 205–246 (GHED…TSLE), 280–328 (GHEN…GVWL), 338–377 (GNTLGFYGCQFGENGSMIIAHAFHGAMHLWKQSTVNPRQW), 385–424 (GHFDGVQDLIWDPEGEFIITTSTDQTTRLFAPWKKKNQSQ), 435–473 (IHGYNLKCLAMIDRFQFVSGADEKVLRVFSAPRNFVENF), 563–607 (GHGY…QVQS), 610–649 (YHTLTVTQMAFSPDDKFLLAVSRDRTWSLWKRQDVTSAEF), 665–704 (VHSRIIWSCDWSPDSKYFFTGSRDKKVVVWGECNSSYNPM), 716–760 (DVGS…QETK), and 773–821 (SHTL…RCAL).

The protein belongs to the WD repeat ELP2 family. Component of the elongator complex which consists of ELP1, ELP2, ELP3, ELP4, ELP5 and ELP6. Interacts with STAT3 and JAKs.

It localises to the cytoplasm. It is found in the nucleus. It functions in the pathway tRNA modification; 5-methoxycarbonylmethyl-2-thiouridine-tRNA biosynthesis. Component of the elongator complex which is required for multiple tRNA modifications, including mcm5U (5-methoxycarbonylmethyl uridine), mcm5s2U (5-methoxycarbonylmethyl-2-thiouridine), and ncm5U (5-carbamoylmethyl uridine). The elongator complex catalyzes the formation of carboxymethyluridine in the wobble base at position 34 in tRNAs. This Rattus norvegicus (Rat) protein is Elongator complex protein 2 (Elp2).